We begin with the raw amino-acid sequence, 169 residues long: Crossover junction endodeoxyribonuclease RuvC (169 aa).

Catalysis depends on residues Asp-11, Glu-71, and Asp-143. Residues Asp-11, Glu-71, and Asp-143 each contribute to the Mg(2+) site.

It belongs to the RuvC family. As to quaternary structure, homodimer which binds Holliday junction (HJ) DNA. The HJ becomes 2-fold symmetrical on binding to RuvC with unstacked arms; it has a different conformation from HJ DNA in complex with RuvA. In the full resolvosome a probable DNA-RuvA(4)-RuvB(12)-RuvC(2) complex forms which resolves the HJ. Requires Mg(2+) as cofactor.

The protein localises to the cytoplasm. The enzyme catalyses Endonucleolytic cleavage at a junction such as a reciprocal single-stranded crossover between two homologous DNA duplexes (Holliday junction).. In terms of biological role, the RuvA-RuvB-RuvC complex processes Holliday junction (HJ) DNA during genetic recombination and DNA repair. Endonuclease that resolves HJ intermediates. Cleaves cruciform DNA by making single-stranded nicks across the HJ at symmetrical positions within the homologous arms, yielding a 5'-phosphate and a 3'-hydroxyl group; requires a central core of homology in the junction. The consensus cleavage sequence is 5'-(A/T)TT(C/G)-3'. Cleavage occurs on the 3'-side of the TT dinucleotide at the point of strand exchange. HJ branch migration catalyzed by RuvA-RuvB allows RuvC to scan DNA until it finds its consensus sequence, where it cleaves and resolves the cruciform DNA. The chain is Crossover junction endodeoxyribonuclease RuvC from Bartonella henselae (strain ATCC 49882 / DSM 28221 / CCUG 30454 / Houston 1) (Rochalimaea henselae).